Reading from the N-terminus, the 353-residue chain is ATP-dependent kinase YFH7 (353 aa).

31-39 (GSPGSGKST) lines the ATP pocket.

Belongs to the YFH7 family.

In terms of biological role, ATP-dependent kinase that could be involved in endoplasmic reticulum membrane assembly. The protein is ATP-dependent kinase YFH7 (YFH7) of Saccharomyces cerevisiae (strain RM11-1a) (Baker's yeast).